A 93-amino-acid polypeptide reads, in one-letter code: UPF0223 protein YfdD (93 aa).

Belongs to the UPF0223 family.

This is UPF0223 protein YfdD (yfdD) from Lactococcus lactis subsp. lactis (strain IL1403) (Streptococcus lactis).